Reading from the N-terminus, the 239-residue chain is Peptidyl-tRNA hydrolase (239 aa).

Position 14 (Tyr14) interacts with tRNA. His19 serves as the catalytic Proton acceptor. Positions 64, 66, and 112 each coordinate tRNA. Residues 188-225 (GGKPDAEEPQAPKKQVGQSHIHKARNAAQPKKLPATGP) form a disordered region.

Belongs to the PTH family. In terms of assembly, monomer.

Its subcellular location is the cytoplasm. The enzyme catalyses an N-acyl-L-alpha-aminoacyl-tRNA + H2O = an N-acyl-L-amino acid + a tRNA + H(+). Functionally, hydrolyzes ribosome-free peptidyl-tRNAs (with 1 or more amino acids incorporated), which drop off the ribosome during protein synthesis, or as a result of ribosome stalling. Its function is as follows. Catalyzes the release of premature peptidyl moieties from peptidyl-tRNA molecules trapped in stalled 50S ribosomal subunits, and thus maintains levels of free tRNAs and 50S ribosomes. The sequence is that of Peptidyl-tRNA hydrolase from Sinorhizobium fredii (strain NBRC 101917 / NGR234).